A 75-amino-acid chain; its full sequence is UPF0270 protein PSEEN1465 (75 aa).

It belongs to the UPF0270 family.

The protein is UPF0270 protein PSEEN1465 of Pseudomonas entomophila (strain L48).